A 176-amino-acid chain; its full sequence is ATP-dependent protease subunit HslV (176 aa).

The active site involves threonine 5. Glycine 161, cysteine 164, and threonine 167 together coordinate Na(+).

Belongs to the peptidase T1B family. HslV subfamily. A double ring-shaped homohexamer of HslV is capped on each side by a ring-shaped HslU homohexamer. The assembly of the HslU/HslV complex is dependent on binding of ATP.

It is found in the cytoplasm. It catalyses the reaction ATP-dependent cleavage of peptide bonds with broad specificity.. Its activity is regulated as follows. Allosterically activated by HslU binding. Protease subunit of a proteasome-like degradation complex believed to be a general protein degrading machinery. In Wolinella succinogenes (strain ATCC 29543 / DSM 1740 / CCUG 13145 / JCM 31913 / LMG 7466 / NCTC 11488 / FDC 602W) (Vibrio succinogenes), this protein is ATP-dependent protease subunit HslV.